Reading from the N-terminus, the 755-residue chain is Tryptophan 2-monooxygenase (755 aa).

Positions 247, 267, 275, and 295 each coordinate FMN. Arginine 295 is a substrate binding site.

Belongs to the tryptophan 2-monooxygenase family. It depends on FMN as a cofactor.

It catalyses the reaction L-tryptophan + O2 = indole-3-acetamide + CO2 + H2O. It functions in the pathway plant hormone metabolism; auxin biosynthesis. The protein is Tryptophan 2-monooxygenase (iaaM) of Agrobacterium vitis (Rhizobium vitis).